The primary structure comprises 192 residues: Anthranilate synthase component 2 (192 aa).

In terms of domain architecture, Glutamine amidotransferase type-1 spans 1 to 192; that stretch reads MIVLVNNRDS…KNFVEMSRNG (192 aa). An L-glutamine-binding site is contributed by 50–52; that stretch reads GPG. Residue Cys-78 is the Nucleophile; for GATase activity of the active site. Residues Gln-82 and 127–128 each bind L-glutamine; that span reads SL. Active-site for GATase activity residues include His-165 and Glu-167.

As to quaternary structure, heterotetramer consisting of two non-identical subunits: a beta subunit (TrpG) and a large alpha subunit (TrpE).

It catalyses the reaction chorismate + L-glutamine = anthranilate + pyruvate + L-glutamate + H(+). Its pathway is amino-acid biosynthesis; L-tryptophan biosynthesis; L-tryptophan from chorismate: step 1/5. Part of a heterotetrameric complex that catalyzes the two-step biosynthesis of anthranilate, an intermediate in the biosynthesis of L-tryptophan. In the first step, the glutamine-binding beta subunit (TrpG) of anthranilate synthase (AS) provides the glutamine amidotransferase activity which generates ammonia as a substrate that, along with chorismate, is used in the second step, catalyzed by the large alpha subunit of AS (TrpE) to produce anthranilate. In the absence of TrpG, TrpE can synthesize anthranilate directly from chorismate and high concentrations of ammonia. This Thermococcus kodakarensis (strain ATCC BAA-918 / JCM 12380 / KOD1) (Pyrococcus kodakaraensis (strain KOD1)) protein is Anthranilate synthase component 2 (trpG).